Consider the following 177-residue polypeptide: Large ribosomal subunit protein uL6 (177 aa).

The protein belongs to the universal ribosomal protein uL6 family. Part of the 50S ribosomal subunit.

Its function is as follows. This protein binds to the 23S rRNA, and is important in its secondary structure. It is located near the subunit interface in the base of the L7/L12 stalk, and near the tRNA binding site of the peptidyltransferase center. In Rickettsia prowazekii (strain Madrid E), this protein is Large ribosomal subunit protein uL6.